The chain runs to 113 residues: Hydrogenase maturation factor HypA (113 aa).

Position 2 (histidine 2) interacts with Ni(2+). Positions 73, 76, 89, and 92 each coordinate Zn(2+).

The protein belongs to the HypA/HybF family.

Functionally, involved in the maturation of [NiFe] hydrogenases. Required for nickel insertion into the metal center of the hydrogenase. This Azotobacter vinelandii protein is Hydrogenase maturation factor HypA.